The sequence spans 84 residues: Insulin-like peptide 05 (84 aa).

An N-terminal signal peptide occupies residues 1-22; sequence MKTPILFVVVVAVLIVTDSAEG. Positions 23 to 37 are excised as a propeptide; that stretch reads FKGKANSFLKPLQRR. 3 cysteine pairs are disulfide-bonded: Cys-43-Cys-48, Cys-44-Cys-73, and Cys-57-Cys-61.

The protein belongs to the insulin family.

Its subcellular location is the secreted. In terms of biological role, insulin decreases blood glucose concentration. May have evolved to activate insulin receptors (INSR) in vertebrates. Molecular docking studies reveals unique interaction with the human insulin receptor. In vivo, insulin-like peptide injection reduces blood glucose levels in two models of zebrafish diabetes (streptozotocin- and glucose-induced). Also shorter swimming distance of zebrafish larvae, an effect which is not observed with human insulin. In Exaiptasia diaphana (Tropical sea anemone), this protein is Insulin-like peptide 05.